A 232-amino-acid chain; its full sequence is Megakaryocyte and platelet inhibitory receptor G6b (232 aa).

A signal peptide spans 1–17 (MALVLQLLPLLLSKVQG). The Extracellular segment spans residues 18-140 (NPEVSLEGNP…GSTHGSEYSK (123 aa)). N-linked (GlcNAc...) asparagine glycosylation is found at asparagine 32 and asparagine 112. Residues 141–161 (VLIPLLGFGLVLGLGALGLVW) traverse the membrane as a helical segment. The Cytoplasmic segment spans residues 162-232 (WRRSCVPPSH…DASTVYAVVV (71 aa)). Short sequence motifs (ITIM motif) lie at residues 200 to 205 (LHYADL) and 226 to 231 (TVYAVV). Tyrosine 202 carries the post-translational modification Phosphotyrosine.

Interacts (via ITIM motif) with PTPN6 and PTPN11. Binds to heparin. N-glycosylated. In terms of processing, may be O-glycosylated. Post-translationally, phosphorylated.

Its subcellular location is the cell membrane. In terms of biological role, inhibitory receptor that acts as a critical regulator of hematopoietic lineage differentiation, megakaryocyte function and platelet production. Inhibits platelet aggregation and activation by agonists such as ADP and collagen-related peptide. This regulation of megakaryocate function as well as platelet production ann activation is done through the inhibition (via the 2 ITIM motifs) of the receptors CLEC1B and GP6:FcRgamma signaling. Appears to operate in a calcium-independent manner. The protein is Megakaryocyte and platelet inhibitory receptor G6b of Rattus norvegicus (Rat).